The primary structure comprises 361 residues: Biotin synthase (361 aa).

The Radical SAM core domain occupies 47–278; it reads VHGDEVALCG…AAHIFVMGGR (232 aa). [4Fe-4S] cluster is bound by residues Cys65, Cys69, and Cys72. Residues Ser110, Cys143, and Cys203 each coordinate [2Fe-2S] cluster.

Belongs to the radical SAM superfamily. Biotin synthase family. As to quaternary structure, homodimer. Requires [4Fe-4S] cluster as cofactor. The cofactor is [2Fe-2S] cluster.

It catalyses the reaction (4R,5S)-dethiobiotin + (sulfur carrier)-SH + 2 reduced [2Fe-2S]-[ferredoxin] + 2 S-adenosyl-L-methionine = (sulfur carrier)-H + biotin + 2 5'-deoxyadenosine + 2 L-methionine + 2 oxidized [2Fe-2S]-[ferredoxin]. The protein operates within cofactor biosynthesis; biotin biosynthesis; biotin from 7,8-diaminononanoate: step 2/2. Functionally, catalyzes the conversion of dethiobiotin (DTB) to biotin by the insertion of a sulfur atom into dethiobiotin via a radical-based mechanism. The protein is Biotin synthase of Anaeromyxobacter dehalogenans (strain 2CP-C).